A 554-amino-acid polypeptide reads, in one-letter code: Glucose-6-phosphate isomerase (554 aa).

S2 carries the N-acetylserine modification. At T53 the chain carries Phosphothreonine. D-glucose 6-phosphate contacts are provided by residues G168–S169, S218–T223, Q363, E367, H398, and K520. A Phosphothreonine modification is found at T220. Catalysis depends on E367, which acts as the Proton donor. Catalysis depends on residues H398 and K520.

It belongs to the GPI family. As to quaternary structure, homodimer.

It is found in the cytoplasm. It localises to the cytosol. The enzyme catalyses alpha-D-glucose 6-phosphate = beta-D-fructose 6-phosphate. It functions in the pathway carbohydrate degradation; glycolysis; D-glyceraldehyde 3-phosphate and glycerone phosphate from D-glucose: step 2/4. With respect to regulation, strongly inhibited by the polyol (sugar alcohol) phosphate D-glucitol 6-phosphate (D-sorbitol 6-phosphate). Also inhibited by the polyol (sugar alcohol) phosphate D-ribitol 5-phosphate. In the cytoplasm, catalyzes the conversion of glucose-6-phosphate to fructose-6-phosphate, the second step in glycolysis, and the reverse reaction during gluconeogenesis. The chain is Glucose-6-phosphate isomerase (PGI1) from Saccharomyces cerevisiae (strain ATCC 204508 / S288c) (Baker's yeast).